Here is a 370-residue protein sequence, read N- to C-terminus: Dihydrolipoyllysine-residue acetyltransferase component of acetoin cleaving system (370 aa).

The Lipoyl-binding domain maps to 4-79 (IHTLTMPKWG…PVGALLAVVV (76 aa)). At Lys45 the chain carries N6-lipoyllysine. In terms of domain architecture, AB hydrolase-1 spans 135–355 (PLVLVHGFGG…EAGHMVQMEA (221 aa)).

(R)-lipoate serves as cofactor.

The catalysed reaction is N(6)-[(R)-dihydrolipoyl]-L-lysyl-[protein] + acetyl-CoA = N(6)-[(R)-S(8)-acetyldihydrolipoyl]-L-lysyl-[protein] + CoA. It participates in ketone degradation; acetoin degradation. The chain is Dihydrolipoyllysine-residue acetyltransferase component of acetoin cleaving system (acoC) from Pseudomonas putida (Arthrobacter siderocapsulatus).